We begin with the raw amino-acid sequence, 443 residues long: Tubulin beta-1/beta-2 chain (443 aa).

Residues Q11, E69, S138, G142, T143, G144, N204, and N226 each coordinate GTP. E69 is a Mg(2+) binding site. The tract at residues Q424–A443 is disordered. The span at S429–A443 shows a compositional bias: acidic residues.

Belongs to the tubulin family. Dimer of alpha and beta chains. A typical microtubule is a hollow water-filled tube with an outer diameter of 25 nm and an inner diameter of 15 nM. Alpha-beta heterodimers associate head-to-tail to form protofilaments running lengthwise along the microtubule wall with the beta-tubulin subunit facing the microtubule plus end conferring a structural polarity. Microtubules usually have 13 protofilaments but different protofilament numbers can be found in some organisms and specialized cells. Requires Mg(2+) as cofactor.

The protein resides in the cytoplasm. It localises to the cytoskeleton. Its function is as follows. Tubulin is the major constituent of microtubules, a cylinder consisting of laterally associated linear protofilaments composed of alpha- and beta-tubulin heterodimers. Microtubules grow by the addition of GTP-tubulin dimers to the microtubule end, where a stabilizing cap forms. Below the cap, tubulin dimers are in GDP-bound state, owing to GTPase activity of alpha-tubulin. In Chlamydomonas reinhardtii (Chlamydomonas smithii), this protein is Tubulin beta-1/beta-2 chain (TUBB1).